The chain runs to 210 residues: Large ribosomal subunit protein uL22 (210 aa).

The tract at residues 123-210 (NEMTSKETVK…TKSTKKEGSK (88 aa)) is disordered. The segment covering 126 to 157 (TSKETVKEPAKKPSAKVEKPAEAKAPKQETST) has biased composition (basic and acidic residues). The segment covering 158–185 (KKPTTTTESKPKTSKAPAQKQAAKVAKP) has biased composition (low complexity).

The protein belongs to the universal ribosomal protein uL22 family. As to quaternary structure, part of the 50S ribosomal subunit.

In terms of biological role, this protein binds specifically to 23S rRNA; its binding is stimulated by other ribosomal proteins, e.g. L4, L17, and L20. It is important during the early stages of 50S assembly. It makes multiple contacts with different domains of the 23S rRNA in the assembled 50S subunit and ribosome. Its function is as follows. The globular domain of the protein is located near the polypeptide exit tunnel on the outside of the subunit, while an extended beta-hairpin is found that lines the wall of the exit tunnel in the center of the 70S ribosome. This Metamycoplasma arthritidis (strain 158L3-1) (Mycoplasma arthritidis) protein is Large ribosomal subunit protein uL22.